The primary structure comprises 352 residues: Rhodopsin (352 aa).

Residues 1–36 are Extracellular-facing; the sequence is MNGTEGPFFYIPMVNTTGIVRSPYEYPQYYLVNPAA. 2 N-linked (GlcNAc...) asparagine glycosylation sites follow: Asn-2 and Asn-15. The helical transmembrane segment at 37-61 threads the bilayer; the sequence is YACLGAYMFFLILVGFPVNFLTLYV. At 62–73 the chain is on the cytoplasmic side; sequence TLEHKKLRTPLN. A helical membrane pass occupies residues 74–96; it reads YILLNLAVADLFMVFGGFTTTMY. The Extracellular portion of the chain corresponds to 97-110; sequence TSMHGYFVLGRLGC. The cysteines at positions 110 and 187 are disulfide-linked. A helical membrane pass occupies residues 111 to 133; that stretch reads NIEGFFATLGGEIALWSLVVLAI. The short motif at 134 to 136 is the 'Ionic lock' involved in activated form stabilization element; sequence ERW. The Cytoplasmic portion of the chain corresponds to 134–152; sequence ERWVVVCKPISNFRFGENH. A helical membrane pass occupies residues 153–173; the sequence is AIMGVAFTWFMASACAVPPLV. Residues 174–202 lie on the Extracellular side of the membrane; sequence GWSRYIPEGMQCSCGVDYYTRAEGFNNES. Asn-200 carries an N-linked (GlcNAc...) asparagine glycan. The chain crosses the membrane as a helical span at residues 203-224; that stretch reads FVIYMFIVHFCIPLAVVGFCYG. The Cytoplasmic segment spans residues 225 to 252; that stretch reads RLLCAVKEAAAAQQESETTQRAEREVSR. A helical transmembrane segment spans residues 253–274; it reads MVVIMVIGFLVCWLPYASVAWY. The Extracellular segment spans residues 275–286; the sequence is IFTHQGSEFGPP. A helical transmembrane segment spans residues 287 to 308; the sequence is FMTVPAFFAKSSSIYNPMIYIC. Lys-296 carries the post-translational modification N6-(retinylidene)lysine. The Cytoplasmic portion of the chain corresponds to 309–352; sequence MNKQFRHCMITTLCCGKNPFEEEEGASTTKTEASSVSSSSVSPA. 2 S-palmitoyl cysteine lipidation sites follow: Cys-322 and Cys-323. Residues 331 to 352 are disordered; that stretch reads EEGASTTKTEASSVSSSSVSPA. A compositionally biased stretch (low complexity) spans 342 to 352; it reads SSVSSSSVSPA.

The protein belongs to the G-protein coupled receptor 1 family. Opsin subfamily. Post-translationally, phosphorylated on some or all of the serine and threonine residues present in the C-terminal region. Contains one covalently linked retinal chromophore.

The protein localises to the membrane. It is found in the cell projection. Its subcellular location is the cilium. It localises to the photoreceptor outer segment. Photoreceptor required for image-forming vision at low light intensity. While most salt water fish species use retinal as chromophore, most freshwater fish use 3-dehydroretinal, or a mixture of retinal and 3-dehydroretinal. Light-induced isomerization of 11-cis to all-trans retinal triggers a conformational change that activates signaling via G-proteins. Subsequent receptor phosphorylation mediates displacement of the bound G-protein alpha subunit by arrestin and terminates signaling. The sequence is that of Rhodopsin (rho) from Zosterisessor ophiocephalus (Grass goby).